A 215-amino-acid polypeptide reads, in one-letter code: GTP-binding protein YPT6 (215 aa).

Position 17–24 (17–24 (GEQGVGKT)) interacts with GTP. An Effector region motif is present at residues 39 to 47 (YQATIGIDF). Residues 65-69 (DTAGQ) and 124-127 (NKSD) each bind GTP. A compositionally biased stretch (polar residues) spans 178–196 (NSESTPLDSENANSANQNK). A disordered region spans residues 178-215 (NSESTPLDSENANSANQNKPGVIDISTAEEQEQSACQC). Residues Cys-213 and Cys-215 are each lipidated (S-geranylgeranyl cysteine). Cys-215 carries the cysteine methyl ester modification.

This sequence belongs to the small GTPase superfamily. Rab family. In terms of assembly, interacts with YIF1, YIP3 and YIP4.

It is found in the cell membrane. In terms of biological role, protein transport. Might participate in post-Golgi transport. In Saccharomyces cerevisiae (strain ATCC 204508 / S288c) (Baker's yeast), this protein is GTP-binding protein YPT6 (YPT6).